The sequence spans 148 residues: UPF0756 membrane protein YeaL (148 aa).

4 helical membrane-spanning segments follow: residues 14–34 (ALGF…LIIV), 51–71 (LTIG…SGSL), 80–100 (FFNW…WLGG), and 121–141 (VLGV…AGLV).

This sequence belongs to the UPF0756 family.

It is found in the cell membrane. This is UPF0756 membrane protein YeaL from Escherichia fergusonii (strain ATCC 35469 / DSM 13698 / CCUG 18766 / IAM 14443 / JCM 21226 / LMG 7866 / NBRC 102419 / NCTC 12128 / CDC 0568-73).